Consider the following 561-residue polypeptide: Sensor histidine kinase BtsS (561 aa).

The Cytoplasmic segment spans residues 1–3 (MYD). The helical transmembrane segment at 4 to 24 (FNLVLLLLQQMCVFLVIAWLM) threads the bilayer. At 25–43 (SKTPLFIPLMQVTVRLPHK) the chain is on the periplasmic side. Residues 44–64 (FLCYIVFSIFCIMGTWFGLHI) form a helical membrane-spanning segment. Topologically, residues 65–72 (DDSIANTR) are cytoplasmic. A helical membrane pass occupies residues 73–93 (AIGAVMGGLLGGPVVGGLVGL). The Periplasmic segment spans residues 94 to 108 (TGGLHRYSMGGMTAL). The helical transmembrane segment at 109–129 (SCMISTIVEGLLGGLVHSILI) threads the bilayer. Residues 130-140 (RRGRTDKVFNP) are Cytoplasmic-facing. The helical transmembrane segment at 141 to 161 (ITAGAVTFVAEMVQMLIILAI) threads the bilayer. Residues 162–170 (ARPYEDAVR) lie on the Periplasmic side of the membrane. The chain crosses the membrane as a helical span at residues 171–191 (LVSNIAAPMMVTNTVGAALFM). The Cytoplasmic segment spans residues 192–561 (RILLDKRAMF…TLRLPWRDEA (370 aa)). One can recognise a Histidine kinase domain in the interval 354-559 (QILAGQYERQ…RITLRLPWRD (206 aa)).

In terms of processing, autophosphorylated.

It localises to the cell inner membrane. The enzyme catalyses ATP + protein L-histidine = ADP + protein N-phospho-L-histidine.. Member of the two-component regulatory system BtsS/BtsR. BtsS is a high-affinity receptor for extracellular pyruvate that activates BtsR by phosphorylation. The polypeptide is Sensor histidine kinase BtsS (Escherichia coli O6:H1 (strain CFT073 / ATCC 700928 / UPEC)).